The chain runs to 477 residues: MSPQTETKASVGFKAGVKEYKLAYYTPEYETKDTDILAAFRVTPQPGVPPEEAGAAVAAESSTGTWTTVWTDGLTSLDRYKGRCYHIEPVPGETDQYICYVAYPLDLFEEGSVTNMFTSIVGNAFGFKALRALRLEDLRISPAYIKTFQGPPHGIQVERDKLNKYGRPLLGCTIKPKLGLSAKNYGRACYECLRGGLDFTKDDENVNSQPFMRWRDRFLFCAEAIYKSQAETGEIKGHYLNATAGTCEEMMKRAVFARELGVPIIMHDYLTGGFTANTSLAHYCRDNGLLLHIHRAMHAVIDRQKNHGIHFRVLAKALRMSGGDHIHSGTVVGKLEGERDITLGFVDLLRDDFIEKDRSRGIYFTQDWVSLPGVIPVASGGIHVWHMPALTEIFGDDSVLQFGGGTLGHPWGNAPGAVANRVALEACVKARNEGRDLAQEGNEIIHEACKWSPELAAACEVWREIVFNFAAVDVLDK.

The propeptide occupies 1–2 (MS). N-acetylproline is present on Pro-3. Lys-14 carries the post-translational modification N6,N6,N6-trimethyllysine. 2 residues coordinate substrate: Asn-123 and Thr-173. The active-site Proton acceptor is Lys-175. Lys-177 serves as a coordination point for substrate. 3 residues coordinate Mg(2+): Lys-201, Asp-203, and Glu-204. Lys-201 is subject to N6-carboxylysine. His-294 functions as the Proton acceptor in the catalytic mechanism. Residues Arg-295, His-327, and Ser-379 each coordinate substrate.

The protein belongs to the RuBisCO large chain family. Type I subfamily. Heterohexadecamer of 8 large chains and 8 small chains; disulfide-linked. The disulfide link is formed within the large subunit homodimers. Mg(2+) serves as cofactor. The disulfide bond which can form in the large chain dimeric partners within the hexadecamer appears to be associated with oxidative stress and protein turnover.

Its subcellular location is the plastid. The enzyme catalyses 2 (2R)-3-phosphoglycerate + 2 H(+) = D-ribulose 1,5-bisphosphate + CO2 + H2O. The catalysed reaction is D-ribulose 1,5-bisphosphate + O2 = 2-phosphoglycolate + (2R)-3-phosphoglycerate + 2 H(+). Its function is as follows. RuBisCO catalyzes two reactions: the carboxylation of D-ribulose 1,5-bisphosphate, the primary event in carbon dioxide fixation, as well as the oxidative fragmentation of the pentose substrate in the photorespiration process. Both reactions occur simultaneously and in competition at the same active site. In Lathraea clandestina (Purple toothwort), this protein is Ribulose bisphosphate carboxylase large chain (rbcL).